We begin with the raw amino-acid sequence, 271 residues long: OX-2 membrane glycoprotein homolog (271 aa).

Residues 1 to 24 (MSSLFISLPWVAFIWLALLGAVGG) form the signal peptide. The Extracellular portion of the chain corresponds to 25 to 227 (ARVQGPMRGS…QGPLAHDLPA (203 aa)). The 104-residue stretch at 26–129 (RVQGPMRGSA…SCTACLEVTS (104 aa)) folds into the Ig-like V-type domain. Residues Cys39 and Cys109 are joined by a disulfide bond. Residues Asn83, Asn91, Asn138, Asn157, Asn166, and Asn208 are each glycosylated (N-linked (GlcNAc...) asparagine; by host). In terms of domain architecture, Ig-like C2-type spans 130-220 (PPTGHVQVNS…ISIPASIQGP (91 aa)). Cys148 and Cys202 form a disulfide bridge. The helical transmembrane segment at 228-248 (AQGTLAGVAITLVGLFGIFAL) threads the bilayer. At 249 to 271 (HHCRRKQGGASPTSDDMDPLSTQ) the chain is on the cytoplasmic side.

Interacts with human CD200R1. In terms of processing, N-glycosylated.

Its subcellular location is the host cell membrane. Its function is as follows. Dramatically stimulates primary monocytes, macrophages, and dendritic cells to produce the inflammatory cytokines interleukin 1-beta, IL-6, monocyte chemoattractant protein 1, and TNF-alpha. The induction of inflammatory cytokine production potentially promotes the cytokine-mediated angiogenic proliferation of KSHV-infected cells. This Human herpesvirus 8 type P (isolate GK18) (HHV-8) protein is OX-2 membrane glycoprotein homolog (K14).